The following is a 338-amino-acid chain: tRNA N6-adenosine threonylcarbamoyltransferase (338 aa).

Positions 111 and 115 each coordinate Fe cation. Substrate is bound by residues 133–137 (LVSGG), Asp-166, Gly-179, Asp-183, and Asn-275. Position 300 (Asp-300) interacts with Fe cation.

Belongs to the KAE1 / TsaD family. Fe(2+) is required as a cofactor.

Its subcellular location is the cytoplasm. It carries out the reaction L-threonylcarbamoyladenylate + adenosine(37) in tRNA = N(6)-L-threonylcarbamoyladenosine(37) in tRNA + AMP + H(+). In terms of biological role, required for the formation of a threonylcarbamoyl group on adenosine at position 37 (t(6)A37) in tRNAs that read codons beginning with adenine. Is involved in the transfer of the threonylcarbamoyl moiety of threonylcarbamoyl-AMP (TC-AMP) to the N6 group of A37, together with TsaE and TsaB. TsaD likely plays a direct catalytic role in this reaction. This chain is tRNA N6-adenosine threonylcarbamoyltransferase, found in Treponema denticola (strain ATCC 35405 / DSM 14222 / CIP 103919 / JCM 8153 / KCTC 15104).